A 734-amino-acid chain; its full sequence is MGIQGLLQFLKEASEPVHVKKYKGKTVAVDTYCWLHKGAFACAEKLAKGEPTDQYVQFCMKLVHMLLSFGVKPILVFDGCTLPSKKDVEKARREKRQTNLQKGKQLLREGKLAEARECFSRSVNITSSMAHEVIKAARSEGVDYIVAPYEADSQLAYLNKNDFAEAIITEDSDLLAFGCKKVLLKMDKFGNGLEIDQARFGMCRSLGDVFTEEKFRYMCILSGCDYLPSIHGIGLAKACKLLKVANNPDITKVIQKIGQYLKTNITVPEGYIEGFLRANNTFLYQLVFDPVERKLIPLNPYGNDVNPEELNYAGPNMGDSVALQIALGNMDINTRKQIDDYNPDIPQLSHHRSQSWDNKQLNRKTAHTDSIWYTKSEPCKTTKIEEIHSPRGLILPSKKHTVKRSYEDGVSDTDLISQYSFSKNKKARPDGDDPMQQVPASTMILQPLDDCANTKPKKPIHQPKTRNAFATFLQRQKQDCSSVSATGTRSRFFYKPADEKPHCTEKEQIVCNGSALDIAKETHELTEESSIKTEKEDSLSTISEVCKPNNQRISPLQNQRSCFTWSGSLDSESSPTPKQSPMLLSLQKFHRTTPYMQNEAENKPSWQSSCIKSDTVSQIDSNEKLLKKQDIEDTDSDEHASTPESPCQFTMKASPAHQSFFPEPKGSAPKSKVPGLLKSQSVVSGLRTKVKPRAPAKVSGLTNRSNTKATRNNENVPGLQATIGDLWKNFSYKK.

The interval 1–99 is N-domain; that stretch reads MGIQGLLQFL…KARREKRQTN (99 aa). Positions 30, 78, 150, 152, 171, 173, and 225 each coordinate Mg(2+). The I-domain stretch occupies residues 138 to 229; sequence RSEGVDYIVA…ILSGCDYLPS (92 aa). Disordered regions lie at residues 599-650, 656-675, and 685-716; these read EAEN…CQFT, AHQS…KVPG, and GLRT…NENV. Residues 604 to 620 are compositionally biased toward polar residues; the sequence is PSWQSSCIKSDTVSQID. The span at 621 to 641 shows a compositional bias: basic and acidic residues; it reads SNEKLLKKQDIEDTDSDEHAS. Residues 700–715 are compositionally biased toward polar residues; that stretch reads GLTNRSNTKATRNNEN.

The protein belongs to the XPG/RAD2 endonuclease family. EXO1 subfamily. Mg(2+) is required as a cofactor.

It localises to the nucleus. Functionally, 5'-&gt;3' double-stranded DNA exonuclease which may also contain a cryptic 3'-&gt;5' double-stranded DNA exonuclease activity. Also exhibits endonuclease activity against 5'-overhanging flap structures similar to those generated by displacement synthesis when DNA polymerase encounters the 5'-end of a downstream Okazaki fragment. Required for DNA mismatch repair (MMR). The protein is Exonuclease 1 (exo1) of Xenopus laevis (African clawed frog).